Consider the following 632-residue polypeptide: tRNA uridine 5-carboxymethylaminomethyl modification enzyme MnmG (632 aa).

13-18 is a binding site for FAD; it reads GGGHAG. 273-287 provides a ligand contact to NAD(+); sequence GPRYCPSIEDKIHRF.

Belongs to the MnmG family. In terms of assembly, homodimer. Heterotetramer of two MnmE and two MnmG subunits. FAD is required as a cofactor.

Its subcellular location is the cytoplasm. Functionally, NAD-binding protein involved in the addition of a carboxymethylaminomethyl (cmnm) group at the wobble position (U34) of certain tRNAs, forming tRNA-cmnm(5)s(2)U34. This is tRNA uridine 5-carboxymethylaminomethyl modification enzyme MnmG from Psychrobacter cryohalolentis (strain ATCC BAA-1226 / DSM 17306 / VKM B-2378 / K5).